Consider the following 423-residue polypeptide: Hemoglobinase (423 aa).

The signal sequence occupies residues 1 to 18; sequence MFYSIFFIHILRIVLVDC. Positions 19–29 are excised as a propeptide; sequence NEYSEENVDDR. Active-site residues include histidine 145 and cysteine 186. Residues 286–307 form a disordered region; the sequence is RKKASTEHDEPPMKPKDSIPSR. Residues 286 to 423 constitute a propeptide that is removed on maturation; that stretch reads RKKASTEHDE…INGVIRKVCG (138 aa). Residues 289 to 305 are compositionally biased toward basic and acidic residues; that stretch reads ASTEHDEPPMKPKDSIP.

It belongs to the peptidase C13 family. As to expression, gut.

It catalyses the reaction Hydrolysis of proteins and small molecule substrates at -Asn-|-Xaa- bonds.. Its function is as follows. This protease is used by the parasite for degradation of the host globin. This chain is Hemoglobinase (HAEM), found in Schistosoma japonicum (Blood fluke).